Here is a 284-residue protein sequence, read N- to C-terminus: UDP-N-acetylenolpyruvoylglucosamine reductase (284 aa).

One can recognise an FAD-binding PCMH-type domain in the interval 21–180 (KIGGPARLFV…LKAAFKLKKA (160 aa)). Arginine 159 is an active-site residue. Serine 209 functions as the Proton donor in the catalytic mechanism. Glutamate 280 is an active-site residue.

It belongs to the MurB family. The cofactor is FAD.

The protein resides in the cytoplasm. It carries out the reaction UDP-N-acetyl-alpha-D-muramate + NADP(+) = UDP-N-acetyl-3-O-(1-carboxyvinyl)-alpha-D-glucosamine + NADPH + H(+). It participates in cell wall biogenesis; peptidoglycan biosynthesis. Its function is as follows. Cell wall formation. This Pseudothermotoga lettingae (strain ATCC BAA-301 / DSM 14385 / NBRC 107922 / TMO) (Thermotoga lettingae) protein is UDP-N-acetylenolpyruvoylglucosamine reductase.